Consider the following 473-residue polypeptide: Probable DNA N(6)-methyladenine demethylase ALKBH1B (473 aa).

357 to 359 (NFY) provides a ligand contact to 2-oxoglutarate. Residues His-368, Asp-391, and His-449 each contribute to the Fe cation site. A 2-oxoglutarate-binding site is contributed by 461–465 (RLFFR).

This sequence belongs to the alkB family. The cofactor is Fe(2+). As to expression, undetectable.

The enzyme catalyses an N(6)-methyl-2'-deoxyadenosine in DNA + 2-oxoglutarate + O2 = a 2'-deoxyadenosine in DNA + formaldehyde + succinate + CO2. Functionally, dioxygenase that may catalyzes DNA N(6)-methyladenine (6 mA) demethylation. Requires molecular oxygen, alpha-ketoglutarate and iron. This Arabidopsis thaliana (Mouse-ear cress) protein is Probable DNA N(6)-methyladenine demethylase ALKBH1B.